A 357-amino-acid polypeptide reads, in one-letter code: MPARKYKIHVPCTSANIGPGFDVCGIALSLSLSLVVTIPSVSSGAEPLPKIIYTGLDSDNVPLSPYKNLLTRVALYVLRANGITTFPPGVTIEARNEIPFGRGLGSSGAAVIAGVLLGDLLGNLSLPKSRLLDFALMVERHPDNVTAALMGGFVGSYLRELSPEDMSAASIPLAEVLPEYPPDAGPDWGKSPPQPPHGIGHFVRFGWAKEIKAIAVSPRFELATAKARGVLPESYSRKDMIFNLQRLAVLTTALARSPPDPDLIYDAMGDRVHQPYRMTLIPGLPKILSTLTPTSHPGLLGICLSGAGPTILALATHNFEAIANEIERIFGDEQVLVDHKVLNIDEKGSWVEDITEA.

It belongs to the GHMP kinase family. Homoserine kinase subfamily.

The enzyme catalyses L-homoserine + ATP = O-phospho-L-homoserine + ADP + H(+). The protein operates within amino-acid biosynthesis; L-threonine biosynthesis; L-threonine from L-aspartate: step 4/5. In terms of biological role, commits homoserine to the threonine biosynthesis pathway by catalyzing its O-phosphorylation. In Cryptococcus neoformans var. grubii serotype A (strain H99 / ATCC 208821 / CBS 10515 / FGSC 9487) (Filobasidiella neoformans var. grubii), this protein is Homoserine kinase.